Consider the following 206-residue polypeptide: Cytochrome b-245 chaperone 1 homolog (206 aa).

Residues 21-43 (GIRSWSILVGIASVGLAAAYYSS) form a helical membrane-spanning segment. The interval 172 to 206 (ADDDYPDDDDGIEDLGLGDSSDSQDDPDGDDDEEH) is disordered. 2 stretches are compositionally biased toward acidic residues: residues 174 to 184 (DDYPDDDDGIE) and 193 to 206 (DSQDDPDGDDDEEH).

The protein belongs to the CYBC1 family.

Its subcellular location is the endoplasmic reticulum membrane. Functions as a chaperone necessary for a stable expression of the CYBA and CYBB subunits of the cytochrome b-245 heterodimer. The protein is Cytochrome b-245 chaperone 1 homolog of Danio rerio (Zebrafish).